We begin with the raw amino-acid sequence, 141 residues long: ATP synthase epsilon chain (141 aa).

The protein belongs to the ATPase epsilon chain family. In terms of assembly, F-type ATPases have 2 components, CF(1) - the catalytic core - and CF(0) - the membrane proton channel. CF(1) has five subunits: alpha(3), beta(3), gamma(1), delta(1), epsilon(1). CF(0) has three main subunits: a, b and c.

Its subcellular location is the cell membrane. Its function is as follows. Produces ATP from ADP in the presence of a proton gradient across the membrane. The chain is ATP synthase epsilon chain from Mycoplasma mobile (strain ATCC 43663 / 163K / NCTC 11711) (Mesomycoplasma mobile).